Here is a 369-residue protein sequence, read N- to C-terminus: MVALVVKIGTSSLSDPSTGDLRLATLGGLAETLTRLRRAGHRIILVSSGAVGVGCARLGLKERPATVAGKQAAAAVGQGLLMSMYDRLFGALGQPVAQVLLTRQDLMDRVRYLNARETLSELWRLGTVPIVNENDTVATDELRFGDNDALSALVAGLVEAQWLVLLTDVAGLYSANPRLDPQARLLSEVTEISEELLQSARGRSLWGSGGMASKLEAARIAASAGVATVITEGNTPQNIERILAGEAIGTRFALARPGGRLSLRKRWIGYGLVPAGALHLDEGAVLAVREGGKSLLPAGVRGVEGRFETGALVRLIDGQGLEFARGLVNYSSEELEKIRGRKSHEIAALLGIEGQPPTAVHRDNLVTLS.

K7 serves as a coordination point for ATP. Substrate is bound by residues S48, D135, and N147. Residues 167-168 (TD) and 208-214 (SGGMASK) contribute to the ATP site. In terms of domain architecture, PUA spans 275–353 (AGALHLDEGA…HEIAALLGIE (79 aa)).

This sequence belongs to the glutamate 5-kinase family.

The protein localises to the cytoplasm. The catalysed reaction is L-glutamate + ATP = L-glutamyl 5-phosphate + ADP. It functions in the pathway amino-acid biosynthesis; L-proline biosynthesis; L-glutamate 5-semialdehyde from L-glutamate: step 1/2. Its function is as follows. Catalyzes the transfer of a phosphate group to glutamate to form L-glutamate 5-phosphate. The sequence is that of Glutamate 5-kinase from Gloeobacter violaceus (strain ATCC 29082 / PCC 7421).